A 393-amino-acid polypeptide reads, in one-letter code: CCA-adding enzyme (393 aa).

2 residues coordinate ATP: Gly-27 and Arg-30. CTP contacts are provided by Gly-27 and Arg-30. Mg(2+) contacts are provided by Asp-40 and Asp-42. Residues Arg-111, Asp-154, Arg-157, Arg-160, and Arg-163 each contribute to the ATP site. 5 residues coordinate CTP: Arg-111, Asp-154, Arg-157, Arg-160, and Arg-163.

This sequence belongs to the tRNA nucleotidyltransferase/poly(A) polymerase family. Bacterial CCA-adding enzyme type 3 subfamily. As to quaternary structure, homodimer. The cofactor is Mg(2+).

The catalysed reaction is a tRNA precursor + 2 CTP + ATP = a tRNA with a 3' CCA end + 3 diphosphate. It catalyses the reaction a tRNA with a 3' CCA end + 2 CTP + ATP = a tRNA with a 3' CCACCA end + 3 diphosphate. Catalyzes the addition and repair of the essential 3'-terminal CCA sequence in tRNAs without using a nucleic acid template. Adds these three nucleotides in the order of C, C, and A to the tRNA nucleotide-73, using CTP and ATP as substrates and producing inorganic pyrophosphate. tRNA 3'-terminal CCA addition is required both for tRNA processing and repair. Also involved in tRNA surveillance by mediating tandem CCA addition to generate a CCACCA at the 3' terminus of unstable tRNAs. While stable tRNAs receive only 3'-terminal CCA, unstable tRNAs are marked with CCACCA and rapidly degraded. This is CCA-adding enzyme from Listeria monocytogenes serovar 1/2a (strain ATCC BAA-679 / EGD-e).